The primary structure comprises 247 residues: Protein NipSnap homolog 3A (247 aa).

Residues K48 and K166 each carry the N6-acetyllysine modification.

Belongs to the NipSnap family. In terms of assembly, interacts with the Salmonella typhimurium virulence protein spiC. Ubiquitous. Highly expressed in liver, kidney and muscle. Expressed at intermediate level in brain, heart, colon, thymus, kidney, small intestine, placenta, lung, leukocytes and spleen.

It is found in the cytoplasm. It localises to the cytosol. In Homo sapiens (Human), this protein is Protein NipSnap homolog 3A (NIPSNAP3A).